Consider the following 330-residue polypeptide: Inositol 2-dehydrogenase (330 aa).

This sequence belongs to the Gfo/Idh/MocA family.

The catalysed reaction is myo-inositol + NAD(+) = scyllo-inosose + NADH + H(+). It participates in polyol metabolism; myo-inositol degradation into acetyl-CoA; acetyl-CoA from myo-inositol: step 1/7. Involved in the oxidation of myo-inositol (MI) to 2-keto-myo-inositol (2KMI or 2-inosose). The polypeptide is Inositol 2-dehydrogenase (idhA) (Rhizobium meliloti (strain 1021) (Ensifer meliloti)).